A 114-amino-acid polypeptide reads, in one-letter code: Vacuolar ATPase assembly integral membrane protein VMA21 (114 aa).

The Cytoplasmic portion of the chain corresponds to 1–39 (MATRRIISQEKTLLEKDDSIGSSPAADEKSNIAPAVPTS). A helical transmembrane segment spans residues 40–60 (VIMKLLAFTLGMIVIPIGSYF). Residues 61–73 (ATVDSVFNGNSTY) are Lumenal-facing. A helical transmembrane segment spans residues 74 to 94 (AGALAAIMANVVLIGYIFVAM). Over 95 to 114 (AEDQSDQQEGGGPGDGKKDR) the chain is Cytoplasmic. Positions 111 to 114 (KKDR) match the Prevents secretion from ER motif.

It belongs to the VMA21 family.

It is found in the endoplasmic reticulum membrane. The protein localises to the endoplasmic reticulum-Golgi intermediate compartment membrane. Its subcellular location is the cytoplasmic vesicle. The protein resides in the COPII-coated vesicle membrane. Required for the assembly of the V0 complex of the vacuolar ATPase (V-ATPase) in the endoplasmic reticulum. This is Vacuolar ATPase assembly integral membrane protein VMA21 from Chaetomium globosum (strain ATCC 6205 / CBS 148.51 / DSM 1962 / NBRC 6347 / NRRL 1970) (Soil fungus).